A 195-amino-acid polypeptide reads, in one-letter code: Probable molybdenum cofactor guanylyltransferase (195 aa).

Residues 6–8 (LAG), lysine 18, aspartate 67, and aspartate 93 each bind GTP. Aspartate 93 is a Mg(2+) binding site.

This sequence belongs to the MobA family. The cofactor is Mg(2+).

The protein localises to the cytoplasm. The enzyme catalyses Mo-molybdopterin + GTP + H(+) = Mo-molybdopterin guanine dinucleotide + diphosphate. Its function is as follows. Transfers a GMP moiety from GTP to Mo-molybdopterin (Mo-MPT) cofactor (Moco or molybdenum cofactor) to form Mo-molybdopterin guanine dinucleotide (Mo-MGD) cofactor. The protein is Probable molybdenum cofactor guanylyltransferase of Thermococcus sibiricus (strain DSM 12597 / MM 739).